The chain runs to 435 residues: NADH-quinone oxidoreductase subunit D 2 (435 aa).

The protein belongs to the complex I 49 kDa subunit family. As to quaternary structure, NDH-1 is composed of 14 different subunits. Subunits NuoB, C, D, E, F, and G constitute the peripheral sector of the complex.

It is found in the cell inner membrane. The enzyme catalyses a quinone + NADH + 5 H(+)(in) = a quinol + NAD(+) + 4 H(+)(out). Its function is as follows. NDH-1 shuttles electrons from NADH, via FMN and iron-sulfur (Fe-S) centers, to quinones in the respiratory chain. The immediate electron acceptor for the enzyme in this species is believed to be ubiquinone. Couples the redox reaction to proton translocation (for every two electrons transferred, four hydrogen ions are translocated across the cytoplasmic membrane), and thus conserves the redox energy in a proton gradient. The polypeptide is NADH-quinone oxidoreductase subunit D 2 (Stenotrophomonas maltophilia (strain R551-3)).